The primary structure comprises 343 residues: Putative MO25-like protein At4g17270 (343 aa).

This sequence belongs to the Mo25 family.

This chain is Putative MO25-like protein At4g17270, found in Arabidopsis thaliana (Mouse-ear cress).